The following is a 959-amino-acid chain: DNA polymerase 1 (959 aa).

The disordered stretch occupies residues 1-110; sequence MRVRGGQEAA…LTLEPSPQSE (110 aa). A compositionally biased stretch (basic and acidic residues) spans 44-60; it reads KKPEPPPTLHREREPES.

Belongs to the DNA polymerase type-B family.

It catalyses the reaction DNA(n) + a 2'-deoxyribonucleoside 5'-triphosphate = DNA(n+1) + diphosphate. This chain is DNA polymerase 1 (polA), found in Aeropyrum pernix (strain ATCC 700893 / DSM 11879 / JCM 9820 / NBRC 100138 / K1).